We begin with the raw amino-acid sequence, 259 residues long: Expansin-B6 (259 aa).

The first 24 residues, Met-1–Cys-24, serve as a signal peptide directing secretion. A glycan (N-linked (GlcNAc...) asparagine) is linked at Asn-26. Residues Gly-52 to Thr-160 enclose the Expansin-like EG45 domain. Intrachain disulfides connect Cys-55–Cys-82, Cys-85–Cys-155, and Cys-90–Cys-96. Residues Tyr-173–Ser-254 enclose the Expansin-like CBD domain. A glycan (N-linked (GlcNAc...) asparagine) is linked at Asn-249.

This sequence belongs to the expansin family. Expansin B subfamily.

The protein resides in the secreted. It is found in the cell wall. Its subcellular location is the membrane. In terms of biological role, may cause loosening and extension of plant cell walls by disrupting non-covalent bonding between cellulose microfibrils and matrix glucans. The polypeptide is Expansin-B6 (Arabidopsis thaliana (Mouse-ear cress)).